Here is a 331-residue protein sequence, read N- to C-terminus: 4-hydroxythreonine-4-phosphate dehydrogenase (331 aa).

Substrate-binding residues include histidine 137 and threonine 138. Positions 167, 212, and 267 each coordinate a divalent metal cation. Substrate is bound by residues lysine 275, asparagine 284, and arginine 293.

It belongs to the PdxA family. Homodimer. Zn(2+) is required as a cofactor. The cofactor is Mg(2+). Requires Co(2+) as cofactor.

The protein resides in the cytoplasm. The catalysed reaction is 4-(phosphooxy)-L-threonine + NAD(+) = 3-amino-2-oxopropyl phosphate + CO2 + NADH. Its pathway is cofactor biosynthesis; pyridoxine 5'-phosphate biosynthesis; pyridoxine 5'-phosphate from D-erythrose 4-phosphate: step 4/5. In terms of biological role, catalyzes the NAD(P)-dependent oxidation of 4-(phosphooxy)-L-threonine (HTP) into 2-amino-3-oxo-4-(phosphooxy)butyric acid which spontaneously decarboxylates to form 3-amino-2-oxopropyl phosphate (AHAP). This is 4-hydroxythreonine-4-phosphate dehydrogenase from Yersinia pseudotuberculosis serotype I (strain IP32953).